The primary structure comprises 241 residues: Uridylate kinase (241 aa).

12-15 (KLSG) provides a ligand contact to ATP. An involved in allosteric activation by GTP region spans residues 20 to 25 (GDKGTG). Residue Gly54 participates in UMP binding. ATP-binding residues include Gly55 and Arg59. UMP-binding positions include Asp74 and 135 to 142 (TGSPYFST). 3 residues coordinate ATP: Asn163, Tyr169, and Asp172.

It belongs to the UMP kinase family. In terms of assembly, homohexamer.

Its subcellular location is the cytoplasm. It carries out the reaction UMP + ATP = UDP + ADP. It participates in pyrimidine metabolism; CTP biosynthesis via de novo pathway; UDP from UMP (UMPK route): step 1/1. With respect to regulation, allosterically activated by GTP. Inhibited by UTP. In terms of biological role, catalyzes the reversible phosphorylation of UMP to UDP. This is Uridylate kinase from Pediococcus pentosaceus (strain ATCC 25745 / CCUG 21536 / LMG 10740 / 183-1w).